The sequence spans 159 residues: 2-C-methyl-D-erythritol 2,4-cyclodiphosphate synthase (159 aa).

Asp9 and His11 together coordinate a divalent metal cation. 4-CDP-2-C-methyl-D-erythritol 2-phosphate contacts are provided by residues 9–11 (DVH) and 35–36 (HS). His43 is an a divalent metal cation binding site. 4-CDP-2-C-methyl-D-erythritol 2-phosphate is bound by residues 57-59 (DLG), 62-66 (FPDTD), 133-136 (TTTE), Phe140, and Arg143.

It belongs to the IspF family. As to quaternary structure, homotrimer. Requires a divalent metal cation as cofactor.

The catalysed reaction is 4-CDP-2-C-methyl-D-erythritol 2-phosphate = 2-C-methyl-D-erythritol 2,4-cyclic diphosphate + CMP. The protein operates within isoprenoid biosynthesis; isopentenyl diphosphate biosynthesis via DXP pathway; isopentenyl diphosphate from 1-deoxy-D-xylulose 5-phosphate: step 4/6. Its function is as follows. Involved in the biosynthesis of isopentenyl diphosphate (IPP) and dimethylallyl diphosphate (DMAPP), two major building blocks of isoprenoid compounds. Catalyzes the conversion of 4-diphosphocytidyl-2-C-methyl-D-erythritol 2-phosphate (CDP-ME2P) to 2-C-methyl-D-erythritol 2,4-cyclodiphosphate (ME-CPP) with a corresponding release of cytidine 5-monophosphate (CMP). This is 2-C-methyl-D-erythritol 2,4-cyclodiphosphate synthase from Shouchella clausii (strain KSM-K16) (Alkalihalobacillus clausii).